The following is a 345-amino-acid chain: Phosphate acyltransferase (345 aa).

This sequence belongs to the PlsX family. In terms of assembly, homodimer. Probably interacts with PlsY.

It localises to the cytoplasm. It carries out the reaction a fatty acyl-[ACP] + phosphate = an acyl phosphate + holo-[ACP]. The protein operates within lipid metabolism; phospholipid metabolism. Functionally, catalyzes the reversible formation of acyl-phosphate (acyl-PO(4)) from acyl-[acyl-carrier-protein] (acyl-ACP). This enzyme utilizes acyl-ACP as fatty acyl donor, but not acyl-CoA. This Levilactobacillus brevis (strain ATCC 367 / BCRC 12310 / CIP 105137 / JCM 1170 / LMG 11437 / NCIMB 947 / NCTC 947) (Lactobacillus brevis) protein is Phosphate acyltransferase.